The chain runs to 185 residues: Ribosome-recycling factor (185 aa).

Belongs to the RRF family.

The protein localises to the cytoplasm. Responsible for the release of ribosomes from messenger RNA at the termination of protein biosynthesis. May increase the efficiency of translation by recycling ribosomes from one round of translation to another. In Legionella pneumophila (strain Paris), this protein is Ribosome-recycling factor.